The following is a 436-amino-acid chain: MKRRRKDLKQAAESEQEECQSIAQVVSLGDSDQIQPPPNKKEEEDICEYLLQNFDLDHVMEILMRFPLTSLTRFKCVSKQWSSLISSRYFCNLLYTTVTRQQPRLYMCLKDDGGHRVLLSISSPSRGNTSFVVVEQDLSIPGMGGFFLNVVRGLMCFSRRKKARIYNPSTKQLLTLPAIKSDIVAQQGQTKHHPRYYIGHDPVSDQYKLVCTVAISSLLPRLGNLKSEHWVFALEAGGSWKKVVPLENYRHHAPSTEGRSTSGSVVRYMAWPDNYNCVVVSFDIRSEQLTIIPVPREIHLDEVVPAVTMMADLIEYGGKIAIFYHTNLKDEGSADLWVLEDTGKSEWSKKTLVLQPCQRHLVEDIELIVKGTTQDGKVILAPVEMHSRFYILYYNLQSNDLRKVEIKGVPDSWFDKECYFDLNSMDKSESFIYLET.

The region spanning glutamate 48–valine 98 is the F-box domain. LRR repeat units lie at residues asparagine 276–aspartate 301 and tyrosine 393–lysine 416.

The chain is F-box/LRR-repeat protein At2g40920 from Arabidopsis thaliana (Mouse-ear cress).